The chain runs to 794 residues: MTDTQAAAERIAQLRTELDTHNYRYYVLDEPSIPDAEYDRLFRELQALETEYPQLLTPDSPTQRVSGTPASAFGEVRHEIPMLSLGNAFEEQDLLDFDRRVREGLADLLPGGDLLGGGAEVEYSCEPKLDGLAVSLLYERGQLVRGATRGDGSTGEDITSNVRTIRNVPLKLHGEGWPEILEVRGEVFMSKAGFEALNAKAVETGGKTFANPRNAAAGSLRQLDSKITASRPLEFCAYGFGQVSGTLPDTQVGILEAFRGWGIPISRELRLVKGAQACRDYYDDIGRRRDALAYEIDGVVFKVNRIAFQRELGFRAREPRWAIAHKFPAREELTELLGVEFQVGRTGAVTPVARLKPVQVAGVTVSNATLHNMDEVARLGLRIGDTVVIRRAGDVIPQVMQVVLERRPADAQAIEVPEHCPVCGSAVERTQLVKRSKGKESISEGAIYRCVGRLSCQAQLKQAIIHFVSRRAMDIDGLGDKIVEQLVDRGLVASPADLYTLTYEQVFELEGFAELSTNNLLAAIADSRKPSLARFIFALGIPDVGEETAKLLARSLGSLERIGKALPEVLTYLPDVGAEVAYEIHNFFADEHNRQVIAQLRDAEHGVQLQEEGEVAAEFAACASLAGFIDKLNIPFIAATGAEKLASRFGSLDGIIRADWLDLRQVERLPERAAKSLRDFFDEPANVQRALAIEAQLREFGMHWQSERKAVEGLPLAGQTWVLTGTLEAMSRDVAKDKLEGLGAKVAGSVSAKTHCVVAGPGAGSKLAKANELGVKVLDEDGLLKLFDEHGVAR.

Residues 35-39 (DAEYD), 84-85 (SL), and Glu126 each bind NAD(+). Lys128 (N6-AMP-lysine intermediate) is an active-site residue. Residues Arg149, Glu186, Lys302, and Lys326 each coordinate NAD(+). Residues Cys420, Cys423, Cys450, and Cys456 each contribute to the Zn(2+) site. The region spanning 711-794 (VEGLPLAGQT…KLFDEHGVAR (84 aa)) is the BRCT domain.

This sequence belongs to the NAD-dependent DNA ligase family. LigA subfamily. Requires Mg(2+) as cofactor. The cofactor is Mn(2+).

It carries out the reaction NAD(+) + (deoxyribonucleotide)n-3'-hydroxyl + 5'-phospho-(deoxyribonucleotide)m = (deoxyribonucleotide)n+m + AMP + beta-nicotinamide D-nucleotide.. In terms of biological role, DNA ligase that catalyzes the formation of phosphodiester linkages between 5'-phosphoryl and 3'-hydroxyl groups in double-stranded DNA using NAD as a coenzyme and as the energy source for the reaction. It is essential for DNA replication and repair of damaged DNA. This chain is DNA ligase, found in Pseudomonas aeruginosa (strain UCBPP-PA14).